We begin with the raw amino-acid sequence, 467 residues long: ATP synthase subunit beta (467 aa).

Glycine 150–threonine 157 contributes to the ATP binding site.

This sequence belongs to the ATPase alpha/beta chains family. In terms of assembly, F-type ATPases have 2 components, CF(1) - the catalytic core - and CF(0) - the membrane proton channel. CF(1) has five subunits: alpha(3), beta(3), gamma(1), delta(1), epsilon(1). CF(0) has three main subunits: a(1), b(2) and c(9-12). The alpha and beta chains form an alternating ring which encloses part of the gamma chain. CF(1) is attached to CF(0) by a central stalk formed by the gamma and epsilon chains, while a peripheral stalk is formed by the delta and b chains.

It is found in the cell inner membrane. It catalyses the reaction ATP + H2O + 4 H(+)(in) = ADP + phosphate + 5 H(+)(out). In terms of biological role, produces ATP from ADP in the presence of a proton gradient across the membrane. The catalytic sites are hosted primarily by the beta subunits. The chain is ATP synthase subunit beta from Polaromonas sp. (strain JS666 / ATCC BAA-500).